We begin with the raw amino-acid sequence, 289 residues long: Cyclo(L-tyrosyl-L-tyrosyl) synthase (289 aa).

The tract at residues 1–48 (MSYVAAEPGVLISPTDDLQSPRSAPAAHDENADGITGGTRDDSAPNSR) is disordered. The Nucleophile role is filled by Ser-88. Residues Asn-91, 229-233 (YICAE), and Tyr-253 each bind substrate.

This sequence belongs to the CDPS family. As to quaternary structure, homodimer.

The catalysed reaction is 2 L-tyrosyl-tRNA(Tyr) = cyclo(L-tyrosyl-L-tyrosyl) + 2 tRNA(Tyr). In terms of biological role, involved in the biosynthesis of mycocyclosin. It uses activated amino acids in the form of aminoacyl-tRNAs (aa-tRNAs) as substrates to catalyze the ATP-independent formation of cyclodipeptides which are intermediates in diketopiperazine (DKP) biosynthetic pathways. Catalyzes the formation of cyclo(L-Tyr-L-Tyr) (cYY) from L-tyrosyl-tRNA(Tyr). This is Cyclo(L-tyrosyl-L-tyrosyl) synthase from Mycobacterium tuberculosis (strain CDC 1551 / Oshkosh).